Here is a 431-residue protein sequence, read N- to C-terminus: Glutamate-1-semialdehyde 2,1-aminomutase (431 aa).

Lysine 265 carries the post-translational modification N6-(pyridoxal phosphate)lysine.

This sequence belongs to the class-III pyridoxal-phosphate-dependent aminotransferase family. HemL subfamily. As to quaternary structure, homodimer. The cofactor is pyridoxal 5'-phosphate.

It is found in the cytoplasm. The enzyme catalyses (S)-4-amino-5-oxopentanoate = 5-aminolevulinate. It functions in the pathway porphyrin-containing compound metabolism; protoporphyrin-IX biosynthesis; 5-aminolevulinate from L-glutamyl-tRNA(Glu): step 2/2. The chain is Glutamate-1-semialdehyde 2,1-aminomutase from Pseudoalteromonas atlantica (strain T6c / ATCC BAA-1087).